The primary structure comprises 380 residues: Putative 8-amino-7-oxononanoate synthase (380 aa).

Residue R18 coordinates substrate. 106–107 (GY) serves as a coordination point for pyridoxal 5'-phosphate. H131 serves as a coordination point for substrate. Pyridoxal 5'-phosphate-binding positions include S179, 205-208 (DEAH), and 236-239 (TFGK). An N6-(pyridoxal phosphate)lysine modification is found at K239. T352 contributes to the substrate binding site.

This sequence belongs to the class-II pyridoxal-phosphate-dependent aminotransferase family. BioF subfamily. Homodimer. Pyridoxal 5'-phosphate serves as cofactor.

It carries out the reaction 6-carboxyhexanoyl-[ACP] + L-alanine + H(+) = (8S)-8-amino-7-oxononanoate + holo-[ACP] + CO2. It functions in the pathway cofactor biosynthesis; biotin biosynthesis. Functionally, catalyzes the decarboxylative condensation of pimeloyl-[acyl-carrier protein] and L-alanine to produce 8-amino-7-oxononanoate (AON), [acyl-carrier protein], and carbon dioxide. In Neisseria meningitidis serogroup C / serotype 2a (strain ATCC 700532 / DSM 15464 / FAM18), this protein is Putative 8-amino-7-oxononanoate synthase (bioF).